A 177-amino-acid polypeptide reads, in one-letter code: Thymidine kinase (177 aa).

11–18 serves as a coordination point for ATP; sequence GPMFSGKS. E83 serves as the catalytic Proton acceptor. F113 contacts substrate. 2 residues coordinate Zn(2+): C138 and C141. 157-161 contributes to the substrate binding site; it reads IEIIG. Residues C170 and C173 each coordinate Zn(2+).

The protein belongs to the thymidine kinase family. In terms of assembly, homotetramer. Two molecules of substrate bind to each enzyme tetramer.

It carries out the reaction thymidine + ATP = dTMP + ADP + H(+). Functionally, phosphorylates thymidine and thymidine analogs, such as azidothymidine (AZT). Part of the salvage pathway for pyrimidine deoxyribonucleotide synthesis. This chain is Thymidine kinase (OPG101), found in Cynomys gunnisoni (Gunnison's prairie dog).